A 631-amino-acid chain; its full sequence is Nucleoside triphosphatase I (631 aa).

The region spanning 42–204 (FLGLDSMHSL…TMLVNLLRPG (163 aa)) is the Helicase ATP-binding domain. 55-62 (HETGVGKT) lines the ATP pocket. Residues 141 to 144 (DECH) carry the DEXH box motif. The 166-residue stretch at 367–532 (KFIDVCLGIL…EFVQLFRVFK (166 aa)) folds into the Helicase C-terminal domain.

This sequence belongs to the helicase family. NPH I subfamily. Monomer.

It catalyses the reaction a ribonucleoside 5'-triphosphate + H2O = a ribonucleoside 5'-diphosphate + phosphate + H(+). Serves two roles in transcription; it acts in concert with viral termination factor/capping enzyme to catalyze release of UUUUUNU-containing nascent RNA from the elongation complex, and it acts by itself as a polymerase elongation factor to facilitate readthrough of intrinsic pause sites. The sequence is that of Nucleoside triphosphatase I (NPH1) from Homo sapiens (Human).